A 146-amino-acid chain; its full sequence is 3-dehydroquinate dehydratase (146 aa).

The active-site Proton acceptor is tyrosine 24. Substrate is bound by residues asparagine 73, histidine 79, and aspartate 86. Histidine 99 serves as the catalytic Proton donor. Substrate is bound by residues 100–101 and arginine 110; that span reads LS.

Belongs to the type-II 3-dehydroquinase family. Homododecamer.

The enzyme catalyses 3-dehydroquinate = 3-dehydroshikimate + H2O. The protein operates within metabolic intermediate biosynthesis; chorismate biosynthesis; chorismate from D-erythrose 4-phosphate and phosphoenolpyruvate: step 3/7. Functionally, catalyzes a trans-dehydration via an enolate intermediate. The polypeptide is 3-dehydroquinate dehydratase (Shewanella oneidensis (strain ATCC 700550 / JCM 31522 / CIP 106686 / LMG 19005 / NCIMB 14063 / MR-1)).